The sequence spans 439 residues: ATP-dependent RNA helicase RhlB (439 aa).

The short motif at 9 to 37 (QKFADLPLHPEVKQALAENGFEFCTPIQA) is the Q motif element. In terms of domain architecture, Helicase ATP-binding spans 40-219 (LPVLLQSKDI…YDHMNDPVKV (180 aa)). 53 to 60 (AQTGTGKT) contributes to the ATP binding site. The DEAD box motif lies at 165–168 (DEAD). The Helicase C-terminal domain maps to 243–390 (KMRLLLTLIE…VSNYDSSALL (148 aa)). Positions 398 to 439 (KIPRKHPAGTRNLRERAGAGRPQGAHRSGGRPPRHDRTRRHS) are disordered. The span at 425 to 439 (SGGRPPRHDRTRRHS) shows a compositional bias: basic residues.

It belongs to the DEAD box helicase family. RhlB subfamily. In terms of assembly, component of the RNA degradosome, which is a multiprotein complex involved in RNA processing and mRNA degradation.

It localises to the cytoplasm. It carries out the reaction ATP + H2O = ADP + phosphate + H(+). DEAD-box RNA helicase involved in RNA degradation. Has RNA-dependent ATPase activity and unwinds double-stranded RNA. The sequence is that of ATP-dependent RNA helicase RhlB from Shewanella putrefaciens (strain CN-32 / ATCC BAA-453).